We begin with the raw amino-acid sequence, 574 residues long: E3 ubiquitin-protein ligase NEURL1 (574 aa).

A compositionally biased stretch (polar residues) spans 1-18; that stretch reads MGNNFSSVSSLQRGNPSR. The disordered stretch occupies residues 1–53; it reads MGNNFSSVSSLQRGNPSRASRGHPQNLKDSIGGSFPVPSHRCHHKQKHCPPTL. A lipid anchor (N-myristoyl glycine) is attached at G2. NHR domains follow at residues 61–217 and 292–447; these read TPLL…QLLD and GDLR…RILG. The segment at 520 to 560 adopts an RING-type zinc-finger fold; it reads ECTICYEHAVDTVIYTCGHMCLCYSCGLRLKKALHACCPIC.

Interacts with CPEB3 (via N-terminal domain); the interaction increases CPEB3 ubiquitination. Interacts with DLL1. In terms of processing, myristoylation is a determinant of membrane targeting. In terms of tissue distribution, expressed in CA1 pyramidal neurons (at protein level). Expressed throughout the adult forebrain, including the cerebral cortex, amygdala, striatum, and CA1 area of the hippocampus. Expressed in sensory neurons of the olfactory epithelium, the vomeronasal organ, mammary gland and skeletal muscle.

It localises to the cytoplasm. The protein resides in the perinuclear region. It is found in the cell membrane. The protein localises to the perikaryon. Its subcellular location is the cell projection. It localises to the dendrite. The protein resides in the postsynaptic density. It carries out the reaction S-ubiquitinyl-[E2 ubiquitin-conjugating enzyme]-L-cysteine + [acceptor protein]-L-lysine = [E2 ubiquitin-conjugating enzyme]-L-cysteine + N(6)-ubiquitinyl-[acceptor protein]-L-lysine.. It functions in the pathway protein modification; protein ubiquitination. Plays a role in hippocampal-dependent synaptic plasticity, learning and memory. Involved in the formation of spines and functional synaptic contacts by modulating the translational activity of the cytoplasmic polyadenylation element-binding protein CPEB3. Promotes ubiquitination of CPEB3, and hence induces CPEB3-dependent mRNA translation activation of glutamate receptor GRIA1 and GRIA2. Can function as an E3 ubiquitin-protein ligase to activate monoubiquitination of JAG1 (in vitro), thereby regulating the Notch pathway. Acts as a tumor suppressor; inhibits malignant cell transformation of medulloblastoma (MB) cells by inhibiting the Notch signaling pathway. The sequence is that of E3 ubiquitin-protein ligase NEURL1 (Neurl1) from Mus musculus (Mouse).